Reading from the N-terminus, the 477-residue chain is Beta-agarase D (477 aa).

Residues Met1–Gly20 form the signal peptide. The GH16 domain occupies Tyr22–Ala378. Residues Met94 to Asn104, Asn123 to Thr125, Glu174, Glu179, Arg206, and Glu340 contribute to the substrate site. Catalysis depends on Glu174, which acts as the Nucleophile. Catalysis depends on Glu179, which acts as the Proton donor. A compositionally biased stretch (low complexity) spans Asn382–Glu391. Positions Asn382 to Pro402 are disordered.

It belongs to the glycosyl hydrolase 16 family.

It is found in the secreted. The enzyme catalyses Hydrolysis of (1-&gt;4)-beta-D-galactosidic linkages in agarose, giving the tetramer as the predominant product.. Functionally, cleaves the beta-1,4-linkages between beta-D-galactose and alpha-L-3,6-anhydro-galactose residues in agarose. Cleaves agarose in a random manner with retention of the anomeric-bond configuration, producing beta-anomers that give rise progressively to alpha-anomers when mutarotation takes place. Requires at least 4 consecutive agarose units and is highly intolerant to modifications. The chain is Beta-agarase D (agaD) from Zobellia galactanivorans (strain DSM 12802 / CCUG 47099 / CIP 106680 / NCIMB 13871 / Dsij).